The sequence spans 236 residues: Purine nucleoside phosphorylase DeoD-type (236 aa).

Histidine 5 lines the a purine D-ribonucleoside pocket. Phosphate-binding positions include glycine 21, arginine 25, arginine 44, and arginine 88 to threonine 91. A purine D-ribonucleoside is bound by residues glutamate 180–glutamate 182 and serine 204–aspartate 205. Aspartate 205 functions as the Proton donor in the catalytic mechanism.

This sequence belongs to the PNP/UDP phosphorylase family. As to quaternary structure, homohexamer; trimer of homodimers.

The catalysed reaction is a purine D-ribonucleoside + phosphate = a purine nucleobase + alpha-D-ribose 1-phosphate. It carries out the reaction a purine 2'-deoxy-D-ribonucleoside + phosphate = a purine nucleobase + 2-deoxy-alpha-D-ribose 1-phosphate. Functionally, catalyzes the reversible phosphorolytic breakdown of the N-glycosidic bond in the beta-(deoxy)ribonucleoside molecules, with the formation of the corresponding free purine bases and pentose-1-phosphate. This Shewanella denitrificans (strain OS217 / ATCC BAA-1090 / DSM 15013) protein is Purine nucleoside phosphorylase DeoD-type.